A 254-amino-acid polypeptide reads, in one-letter code: Allene oxide cyclase 4, chloroplastic (254 aa).

Residues 1-52 (MIMASSAAASISMITLRNLSRNHQSHQSTFLGFSRSFHNQRISSNSPGLSTR) constitute a chloroplast transit peptide.

The protein belongs to the allene oxide cyclase family. Highly expressed in fully developed leaves.

It localises to the plastid. Its subcellular location is the chloroplast. The enzyme catalyses (9Z,13S,15Z)-12,13-epoxyoctadeca-9,11,15-trienoate = (9S,13S,15Z)-12-oxophyto-10,15-dienoate. Involved in the production of 12-oxo-phytodienoic acid (OPDA), a precursor of jasmonic acid. The chain is Allene oxide cyclase 4, chloroplastic (AOC4) from Arabidopsis thaliana (Mouse-ear cress).